The following is a 51-amino-acid chain: uncharacterized protein (51 aa).

The segment at 1–42 is disordered; sequence MKMKTNKYMNMVRPAPPRRADPEGVRDPSTMGGGPNPFLRRS.

Its subcellular location is the mitochondrion. This is an uncharacterized protein from Saccharomyces cerevisiae (strain ATCC 204508 / S288c) (Baker's yeast).